Consider the following 288-residue polypeptide: Oxaloacetate decarboxylase (288 aa).

Serine 47 is a binding site for substrate. Aspartate 85 serves as a coordination point for Mg(2+). 2 residues coordinate substrate: arginine 156 and histidine 232.

Belongs to the isocitrate lyase/PEP mutase superfamily. Oxaloacetate decarboxylase family. As to quaternary structure, homotetramer; dimer of dimers. It depends on Mg(2+) as a cofactor.

It catalyses the reaction oxaloacetate + H(+) = pyruvate + CO2. In terms of biological role, catalyzes the decarboxylation of oxaloacetate into pyruvate. Seems to play a role in maintaining cellular concentrations of bicarbonate and pyruvate. This Rhodopseudomonas palustris (strain ATCC BAA-98 / CGA009) protein is Oxaloacetate decarboxylase.